A 64-amino-acid polypeptide reads, in one-letter code: Translational regulator CsrA (64 aa).

The protein belongs to the CsrA/RsmA family. Homodimer; the beta-strands of each monomer intercalate to form a hydrophobic core, while the alpha-helices form wings that extend away from the core.

The protein localises to the cytoplasm. Its function is as follows. A key translational regulator that binds mRNA to regulate translation initiation and/or mRNA stability. Mediates global changes in gene expression, shifting from rapid growth to stress survival by linking envelope stress, the stringent response and the catabolite repression systems. Usually binds in the 5'-UTR; binding at or near the Shine-Dalgarno sequence prevents ribosome-binding, repressing translation, binding elsewhere in the 5'-UTR can activate translation and/or stabilize the mRNA. Its function is antagonized by small RNA(s). The chain is Translational regulator CsrA from Thioalkalivibrio sulfidiphilus (strain HL-EbGR7).